The primary structure comprises 1265 residues: 1-phosphatidylinositol 4,5-bisphosphate phosphodiesterase gamma-2 (1265 aa).

Residues Arg-20 to Gln-131 form the PH domain. The 145-residue stretch at Gln-312–Lys-456 folds into the PI-PLC X-box domain. Active-site residues include His-327 and His-372. 2 SH2 domains span residues Trp-532 to Val-635 and Trp-646 to Val-735. 2 positions are modified to phosphotyrosine; by BTK: Tyr-753 and Tyr-759. Positions Met-769–Thr-829 constitute an SH3 domain. Positions Leu-930–Arg-1044 constitute a PI-PLC Y-box domain. Residues Leu-1038–Asn-1169 enclose the C2 domain. Tyr-1197 bears the Phosphotyrosine; by BTK mark. A phosphotyrosine mark is found at Tyr-1217 and Tyr-1245.

As to quaternary structure, part of a complex composed of EEIG1, TNFRSF11A/RANK, PLCG2, GAB2, TEC and BTK; complex formation increases in the presence of TNFSF11/RANKL. Interacts (via SH2 domain) with CSF1R (tyrosine phosphorylated). Interacts constitutively with THEMIS2. It depends on Ca(2+) as a cofactor. Post-translationally, phosphorylated on tyrosine residues by CSF1R. Phosphorylated on tyrosine residues by BTK and SYK; upon ligand-induced activation of a variety of growth factor receptors and immune system receptors. Phosphorylation leads to increased phospholipase activity.

It localises to the membrane raft. The catalysed reaction is a 1,2-diacyl-sn-glycero-3-phospho-(1D-myo-inositol-4,5-bisphosphate) + H2O = 1D-myo-inositol 1,4,5-trisphosphate + a 1,2-diacyl-sn-glycerol + H(+). The production of the second messenger molecules diacylglycerol (DAG) and inositol 1,4,5-trisphosphate (IP3) is mediated by activated phosphatidylinositol-specific phospholipase C enzymes. It is a crucial enzyme in transmembrane signaling. In Homo sapiens (Human), this protein is 1-phosphatidylinositol 4,5-bisphosphate phosphodiesterase gamma-2.